A 465-amino-acid chain; its full sequence is GTPase Der (465 aa).

2 EngA-type G domains span residues 3-166 and 184-358; these read FLVA…LNEY and IHFS…ACAN. Residues 9–16, 56–60, 118–121, 190–197, 237–241, and 302–305 each bind GTP; these read GRANVGKS, DTGGI, NKVD, GRPNVGKS, DTAGV, and NKWD. A KH-like domain is found at 359 to 443; the sequence is KKITTADATR…PIVFEFKQSE (85 aa). The interval 446–465 is disordered; it reads FADRKNKRSKDEGSKSKKVK.

Belongs to the TRAFAC class TrmE-Era-EngA-EngB-Septin-like GTPase superfamily. EngA (Der) GTPase family. Associates with the 50S ribosomal subunit.

Its function is as follows. GTPase that plays an essential role in the late steps of ribosome biogenesis. The protein is GTPase Der of Francisella tularensis subsp. novicida (strain U112).